The sequence spans 341 residues: tRNA N6-adenosine threonylcarbamoyltransferase (341 aa).

H110 and H114 together coordinate Fe cation. Substrate contacts are provided by residues 133-137, D166, G179, and N276; that span reads LVSGG. D304 contributes to the Fe cation binding site.

The protein belongs to the KAE1 / TsaD family. Fe(2+) serves as cofactor.

The protein localises to the cytoplasm. The enzyme catalyses L-threonylcarbamoyladenylate + adenosine(37) in tRNA = N(6)-L-threonylcarbamoyladenosine(37) in tRNA + AMP + H(+). In terms of biological role, required for the formation of a threonylcarbamoyl group on adenosine at position 37 (t(6)A37) in tRNAs that read codons beginning with adenine. Is involved in the transfer of the threonylcarbamoyl moiety of threonylcarbamoyl-AMP (TC-AMP) to the N6 group of A37, together with TsaE and TsaB. TsaD likely plays a direct catalytic role in this reaction. In Saccharophagus degradans (strain 2-40 / ATCC 43961 / DSM 17024), this protein is tRNA N6-adenosine threonylcarbamoyltransferase.